The chain runs to 123 residues: MARIKVHELREKSKADLSGQLKEFKAELALLRVAKVTGGAPNKLSKIKVVRKSIAQVLTVISQKQKSALREAYKNKKLLPLDLRPKKTRAIRRRLTKHQASLKTEREKKKEMYFPIRKYAIKV.

The protein belongs to the universal ribosomal protein uL29 family.

The sequence is that of Large ribosomal subunit protein uL29y (RPL35B) from Arabidopsis thaliana (Mouse-ear cress).